A 423-amino-acid polypeptide reads, in one-letter code: Imidazolonepropionase (423 aa).

2 residues coordinate Fe(3+): His78 and His80. Residues His78 and His80 each coordinate Zn(2+). The 4-imidazolone-5-propanoate site is built by Arg87, Tyr150, and His183. Residue Tyr150 coordinates N-formimidoyl-L-glutamate. Residue His247 participates in Fe(3+) binding. His247 lines the Zn(2+) pocket. Glu250 serves as a coordination point for 4-imidazolone-5-propanoate. Position 322 (Asp322) interacts with Fe(3+). Residue Asp322 coordinates Zn(2+). N-formimidoyl-L-glutamate contacts are provided by Asn324 and Gly326. Residue Ser327 coordinates 4-imidazolone-5-propanoate.

This sequence belongs to the metallo-dependent hydrolases superfamily. HutI family. Zn(2+) serves as cofactor. Requires Fe(3+) as cofactor.

The protein localises to the cytoplasm. The enzyme catalyses 4-imidazolone-5-propanoate + H2O = N-formimidoyl-L-glutamate. It functions in the pathway amino-acid degradation; L-histidine degradation into L-glutamate; N-formimidoyl-L-glutamate from L-histidine: step 3/3. Catalyzes the hydrolytic cleavage of the carbon-nitrogen bond in imidazolone-5-propanoate to yield N-formimidoyl-L-glutamate. It is the third step in the universal histidine degradation pathway. The chain is Imidazolonepropionase from Bacillus thuringiensis (strain Al Hakam).